The chain runs to 420 residues: Glucose-1-phosphate adenylyltransferase (420 aa).

Alpha-D-glucose 1-phosphate-binding positions include Tyr107, Gly173, 188–189 (EK), and Ser206.

This sequence belongs to the bacterial/plant glucose-1-phosphate adenylyltransferase family. In terms of assembly, homotetramer.

The enzyme catalyses alpha-D-glucose 1-phosphate + ATP + H(+) = ADP-alpha-D-glucose + diphosphate. It participates in glycan biosynthesis; glycogen biosynthesis. Involved in the biosynthesis of ADP-glucose, a building block required for the elongation reactions to produce glycogen. Catalyzes the reaction between ATP and alpha-D-glucose 1-phosphate (G1P) to produce pyrophosphate and ADP-Glc. This Shewanella oneidensis (strain ATCC 700550 / JCM 31522 / CIP 106686 / LMG 19005 / NCIMB 14063 / MR-1) protein is Glucose-1-phosphate adenylyltransferase.